The following is a 161-amino-acid chain: MTVLEIDLLDETKNLLDEDKQLVENILQFAAEYLKIEQGTELSLTFTTNEGIREINREYRDKDQATDVISFALEEMGDGETEIDWGEFDLETPRMLGDIIISTEKAEEQAKDYGHTKARELGFLAVHGLLHLLGYDHMEPDEEKIMFGLQKEVLDAYGLER.

Zn(2+)-binding residues include His127, His131, and His137.

It belongs to the endoribonuclease YbeY family. The cofactor is Zn(2+).

The protein resides in the cytoplasm. Its function is as follows. Single strand-specific metallo-endoribonuclease involved in late-stage 70S ribosome quality control and in maturation of the 3' terminus of the 16S rRNA. The sequence is that of Endoribonuclease YbeY from Listeria monocytogenes serotype 4b (strain CLIP80459).